Here is a 430-residue protein sequence, read N- to C-terminus: Aspartate aminotransferase, mitochondrial (430 aa).

Residues Met-1 to Ala-29 constitute a mitochondrion transit peptide. Thr-48 is subject to Phosphothreonine. Lys-59 is modified (N6-acetyllysine). Gly-65 serves as a coordination point for substrate. Lys-73 bears the N6-acetyllysine; alternate mark. Lys-73 is subject to N6-succinyllysine; alternate. Position 82 is an N6-acetyllysine (Lys-82). Lys-90 is modified (N6-acetyllysine; alternate). Lys-90 bears the N6-succinyllysine; alternate mark. 3'-nitrotyrosine; alternate is present on Tyr-96. Tyr-96 is subject to Phosphotyrosine; alternate. 2 positions are modified to N6-acetyllysine; alternate: Lys-107 and Lys-122. N6-succinyllysine; alternate is present on residues Lys-107 and Lys-122. Ser-143 bears the Phosphoserine mark. Position 159 is an N6-acetyllysine; alternate (Lys-159). At Lys-159 the chain carries N6-succinyllysine; alternate. Trp-162 provides a ligand contact to substrate. Lys-185 is subject to N6-acetyllysine; alternate. Lys-185 bears the N6-succinyllysine; alternate mark. Asn-215 serves as a coordination point for substrate. At Lys-227 the chain carries N6-succinyllysine. Lys-234 carries the post-translational modification N6-acetyllysine. An N6-acetyllysine; alternate mark is found at Lys-279 and Lys-296. The residue at position 279 (Lys-279) is an N6-(pyridoxal phosphate)lysine; alternate. Lys-296 carries the N6-succinyllysine; alternate modification. Lys-302 is subject to N6-acetyllysine. Lys-309 carries the N6-acetyllysine; alternate modification. N6-succinyllysine; alternate is present on Lys-309. Arg-313 is modified (asymmetric dimethylarginine). Lys-338 carries the N6-acetyllysine; alternate modification. Residue Lys-338 is modified to N6-succinyllysine; alternate. The residue at position 345 (Lys-345) is an N6-acetyllysine. Lys-363 bears the N6-acetyllysine; alternate mark. Lys-363 carries the N6-succinyllysine; alternate modification. 2 positions are modified to N6-acetyllysine: Lys-364 and Lys-387. 2 positions are modified to N6-acetyllysine; alternate: Lys-396 and Lys-404. An N6-succinyllysine; alternate mark is found at Lys-396 and Lys-404. Arg-407 lines the substrate pocket.

The protein belongs to the class-I pyridoxal-phosphate-dependent aminotransferase family. In terms of assembly, homodimer. Pyridoxal 5'-phosphate serves as cofactor.

Its subcellular location is the mitochondrion matrix. It is found in the cell membrane. The enzyme catalyses L-aspartate + 2-oxoglutarate = oxaloacetate + L-glutamate. The catalysed reaction is L-kynurenine + 2-oxoglutarate = 4-(2-aminophenyl)-2,4-dioxobutanoate + L-glutamate. Functionally, catalyzes the irreversible transamination of the L-tryptophan metabolite L-kynurenine to form kynurenic acid (KA). As a member of the malate-aspartate shuttle, it has a key role in the intracellular NAD(H) redox balance. Is important for metabolite exchange between mitochondria and cytosol, and for amino acid metabolism. Facilitates cellular uptake of long-chain free fatty acids. This Bos taurus (Bovine) protein is Aspartate aminotransferase, mitochondrial (GOT2).